The primary structure comprises 229 residues: uncharacterized protein (229 aa).

Transmembrane regions (helical) follow at residues 6 to 26 (LFFV…FLPT), 36 to 56 (LVSV…ILLA), 80 to 99 (SVYD…HRIY), 114 to 134 (VLSV…HLII), 144 to 164 (IFEY…ATML), 174 to 194 (FYYH…IYKF), and 207 to 224 (YVEA…VLSS).

The protein belongs to the mimivirus L68/R809 family.

The protein resides in the membrane. This is an uncharacterized protein from Acanthamoeba polyphaga (Amoeba).